Consider the following 292-residue polypeptide: GTP cyclohydrolase FolE2 (292 aa).

The protein belongs to the GTP cyclohydrolase IV family.

It catalyses the reaction GTP + H2O = 7,8-dihydroneopterin 3'-triphosphate + formate + H(+). The protein operates within cofactor biosynthesis; 7,8-dihydroneopterin triphosphate biosynthesis; 7,8-dihydroneopterin triphosphate from GTP: step 1/1. Converts GTP to 7,8-dihydroneopterin triphosphate. The sequence is that of GTP cyclohydrolase FolE2 from Staphylococcus epidermidis (strain ATCC 12228 / FDA PCI 1200).